Here is a 527-residue protein sequence, read N- to C-terminus: Glucose transporter 1B/1C/1D/1F/2B (527 aa).

Residues 1 to 22 (MTERRDNVSHAPDAIEGPNDGA) form a disordered region. Topologically, residues 1–43 (MTERRDNVSHAPDAIEGPNDGAHAEDTSPGFFSLENLGVAQVQ) are cytoplasmic. Residues 44-64 (VVGGTLNGYVIGYVAVYLLLY) form a helical membrane-spanning segment. Residues 65-118 (LTATECKFTTEGACGGRKIYGCKWSGTTCKFENPKCSEGSDPSDSCKNEVAYTS) are Extracellular-facing. A helical membrane pass occupies residues 119-139 (VYSGIFACAMIVGSMVGSIIA). Topologically, residues 140–151 (GKCITTFGLKKS) are cytoplasmic. A helical transmembrane segment spans residues 152-172 (FIIVSITCTIACVVVQVAIEY). The Extracellular portion of the chain corresponds to 173 to 175 (NNY). The chain crosses the membrane as a helical span at residues 176 to 196 (YALCTGRVLIGLGVGILCSVF). Topologically, residues 197–213 (PMYVNENAHPKLCKMDG) are cytoplasmic. A helical transmembrane segment spans residues 214–234 (VLFQVFTTLGIMLAAMLGLIL). Residues 235-249 (DKTGASKEEANMAGR) are Extracellular-facing. Residues 250-270 (LHVFSAVPLGLSVAMFLVGMF) form a helical membrane-spanning segment. The Cytoplasmic portion of the chain corresponds to 271–299 (LRESTATFAQDDDGKADGGMDPNEYGWGQ). Residues 300–320 (MLWPLFMGAVTAGTLQLTGIN) form a helical membrane-spanning segment. The Extracellular portion of the chain corresponds to 321-338 (AVMNYAPKITENLGMDPS). A helical membrane pass occupies residues 339–359 (LGNFLVMAWNFVTSLVAIPLA). At 360 to 372 (SRFTMRQMFITCS) the chain is on the cytoplasmic side. The helical transmembrane segment at 373 to 393 (FVASCMCLFLCGIPVFPGVAG) threads the bilayer. The Extracellular portion of the chain corresponds to 394 to 403 (KEVKNGVATT). A helical transmembrane segment spans residues 404–424 (GIALFIAAFEFGVGSCFFVLA). The Cytoplasmic portion of the chain corresponds to 425 to 436 (QDLFPPSFRPKG). The helical transmembrane segment at 437-457 (GSFVVMMQFIFNILINLLYPI) threads the bilayer. Residues 458–475 (TTEAISGGATGNQDKGQA) lie on the Extracellular side of the membrane. Residues 476-496 (VAFILFGLIGLICSVLQFFYL) form a helical membrane-spanning segment. The Cytoplasmic segment spans residues 497–527 (YPYDANQDHENDHGGEPVEQKTYPVEASPRN). Residues 506 to 515 (ENDHGGEPVE) show a composition bias toward basic and acidic residues. The segment at 506 to 527 (ENDHGGEPVEQKTYPVEASPRN) is disordered.

Belongs to the major facilitator superfamily. Sugar transporter (TC 2.A.1.1) family.

It is found in the membrane. Functionally, facilitative glucose transporter. The chain is Glucose transporter 1B/1C/1D/1F/2B (THT1B) from Trypanosoma brucei brucei.